Here is a 292-residue protein sequence, read N- to C-terminus: 4-hydroxy-tetrahydrodipicolinate synthase (292 aa).

Thr-45 contacts pyruvate. Residue Tyr-133 is the Proton donor/acceptor of the active site. The active-site Schiff-base intermediate with substrate is Lys-162. Residue Ile-204 participates in pyruvate binding.

This sequence belongs to the DapA family. As to quaternary structure, homotetramer; dimer of dimers.

The protein localises to the cytoplasm. The catalysed reaction is L-aspartate 4-semialdehyde + pyruvate = (2S,4S)-4-hydroxy-2,3,4,5-tetrahydrodipicolinate + H2O + H(+). It participates in amino-acid biosynthesis; L-lysine biosynthesis via DAP pathway; (S)-tetrahydrodipicolinate from L-aspartate: step 3/4. Its function is as follows. Catalyzes the condensation of (S)-aspartate-beta-semialdehyde [(S)-ASA] and pyruvate to 4-hydroxy-tetrahydrodipicolinate (HTPA). The protein is 4-hydroxy-tetrahydrodipicolinate synthase of Nitratidesulfovibrio vulgaris (strain ATCC 29579 / DSM 644 / CCUG 34227 / NCIMB 8303 / VKM B-1760 / Hildenborough) (Desulfovibrio vulgaris).